The primary structure comprises 873 residues: Valine--tRNA ligase (873 aa).

The short motif at 46–56 (PNVTGKLHIGH) is the 'HIGH' region element. A 'KMSKS' region motif is present at residues 525 to 529 (KMSKS). Residue K528 participates in ATP binding. Residues 804–873 (NDDFIDKEKM…ELIQDKLNKM (70 aa)) are a coiled coil.

The protein belongs to the class-I aminoacyl-tRNA synthetase family. ValS type 1 subfamily. As to quaternary structure, monomer.

The protein localises to the cytoplasm. The enzyme catalyses tRNA(Val) + L-valine + ATP = L-valyl-tRNA(Val) + AMP + diphosphate. In terms of biological role, catalyzes the attachment of valine to tRNA(Val). As ValRS can inadvertently accommodate and process structurally similar amino acids such as threonine, to avoid such errors, it has a 'posttransfer' editing activity that hydrolyzes mischarged Thr-tRNA(Val) in a tRNA-dependent manner. The protein is Valine--tRNA ligase of Mesoplasma florum (strain ATCC 33453 / NBRC 100688 / NCTC 11704 / L1) (Acholeplasma florum).